A 307-amino-acid chain; its full sequence is tRNA pseudouridine synthase B (307 aa).

The active-site Nucleophile is aspartate 39.

This sequence belongs to the pseudouridine synthase TruB family. Type 1 subfamily.

The catalysed reaction is uridine(55) in tRNA = pseudouridine(55) in tRNA. Its function is as follows. Responsible for synthesis of pseudouridine from uracil-55 in the psi GC loop of transfer RNAs. In Lactiplantibacillus plantarum (strain ATCC BAA-793 / NCIMB 8826 / WCFS1) (Lactobacillus plantarum), this protein is tRNA pseudouridine synthase B.